The following is a 382-amino-acid chain: Alkanesulfonate monooxygenase (382 aa).

The protein belongs to the SsuD family.

The catalysed reaction is an alkanesulfonate + FMNH2 + O2 = an aldehyde + FMN + sulfite + H2O + 2 H(+). Its function is as follows. Catalyzes the desulfonation of aliphatic sulfonates. This Pseudomonas putida (strain GB-1) protein is Alkanesulfonate monooxygenase.